A 307-amino-acid chain; its full sequence is Glutaminase (307 aa).

Substrate-binding residues include Ser66, Asn116, Glu160, Asn167, Tyr191, Tyr243, and Val261.

It belongs to the glutaminase family. As to quaternary structure, homotetramer.

The catalysed reaction is L-glutamine + H2O = L-glutamate + NH4(+). In Saccharophagus degradans (strain 2-40 / ATCC 43961 / DSM 17024), this protein is Glutaminase.